The primary structure comprises 799 residues: Histidine biosynthesis trifunctional protein (799 aa).

A phosphoribosyl-AMP cyclohydrolase region spans residues 1–229 (MVLPILPLID…FIVEQENVGF (229 aa)). The interval 230–312 (CHLETMSCFG…FYFALAKLVT (83 aa)) is phosphoribosyl-ATP pyrophosphohydrolase. Residues 313–799 (NNVSLKDVEN…KLGLIPKDFQ (487 aa)) are histidinol dehydrogenase. 2 residues coordinate Zn(2+): Gln-618 and His-621. Catalysis depends on residues Glu-687 and His-688. Asp-721 and His-780 together coordinate Zn(2+).

The protein in the C-terminal section; belongs to the histidinol dehydrogenase family. Zn(2+) serves as cofactor.

It catalyses the reaction 1-(5-phospho-beta-D-ribosyl)-5'-AMP + H2O = 1-(5-phospho-beta-D-ribosyl)-5-[(5-phospho-beta-D-ribosylamino)methylideneamino]imidazole-4-carboxamide. The catalysed reaction is 1-(5-phospho-beta-D-ribosyl)-ATP + H2O = 1-(5-phospho-beta-D-ribosyl)-5'-AMP + diphosphate + H(+). It carries out the reaction L-histidinol + 2 NAD(+) + H2O = L-histidine + 2 NADH + 3 H(+). The protein operates within amino-acid biosynthesis; L-histidine biosynthesis; L-histidine from 5-phospho-alpha-D-ribose 1-diphosphate: step 2/9. It functions in the pathway amino-acid biosynthesis; L-histidine biosynthesis; L-histidine from 5-phospho-alpha-D-ribose 1-diphosphate: step 3/9. It participates in amino-acid biosynthesis; L-histidine biosynthesis; L-histidine from 5-phospho-alpha-D-ribose 1-diphosphate: step 9/9. The polypeptide is Histidine biosynthesis trifunctional protein (HIS4) (Saccharomyces bayanus (Yeast)).